A 414-amino-acid polypeptide reads, in one-letter code: Serine hydroxymethyltransferase (414 aa).

Residues Leu-116 and 120-122 (GHL) each bind (6S)-5,6,7,8-tetrahydrofolate. Lys-224 is subject to N6-(pyridoxal phosphate)lysine. Residues Glu-240 and 348–350 (SPF) contribute to the (6S)-5,6,7,8-tetrahydrofolate site.

The protein belongs to the SHMT family. In terms of assembly, homodimer. The cofactor is pyridoxal 5'-phosphate.

It localises to the cytoplasm. The enzyme catalyses (6R)-5,10-methylene-5,6,7,8-tetrahydrofolate + glycine + H2O = (6S)-5,6,7,8-tetrahydrofolate + L-serine. It participates in one-carbon metabolism; tetrahydrofolate interconversion. It functions in the pathway amino-acid biosynthesis; glycine biosynthesis; glycine from L-serine: step 1/1. Catalyzes the reversible interconversion of serine and glycine with tetrahydrofolate (THF) serving as the one-carbon carrier. This reaction serves as the major source of one-carbon groups required for the biosynthesis of purines, thymidylate, methionine, and other important biomolecules. Also exhibits THF-independent aldolase activity toward beta-hydroxyamino acids, producing glycine and aldehydes, via a retro-aldol mechanism. This is Serine hydroxymethyltransferase from Campylobacter jejuni subsp. jejuni serotype O:23/36 (strain 81-176).